The primary structure comprises 363 residues: Melanoma-associated antigen B16 (363 aa).

The tract at residues 33-124 (EPCSSPHLMA…PDQSDSTDLP (92 aa)) is disordered. Residues 82-97 (ASTSSDLQHPYDSSSE) are compositionally biased toward low complexity. The region spanning 128 to 327 (VDGKVDFLVN…TVFLSQYEEA (200 aa)) is the MAGE domain. The interval 342–363 (HADSSSTSGESSSDTSSNFSQV) is disordered.

The chain is Melanoma-associated antigen B16 (Mageb16) from Mus musculus (Mouse).